The primary structure comprises 467 residues: Ran-binding protein M homolog (467 aa).

The tract at residues 1–25 (MNSSPPPANSANGDTTNNGENGQDL) is disordered. Residues 9-25 (NSANGDTTNNGENGQDL) are compositionally biased toward polar residues. Residues 31 to 219 (DKIRLSAKRD…VLVNFGKKKF (189 aa)) enclose the B30.2/SPRY domain. The 33-residue stretch at 244–276 (PPNIGYGLVKTYLLHYGYEETLDAFNLATKNTV) folds into the LisH domain. A CTLH domain is found at 295–353 (ALKQRKNLRQLVRNGEIDTALAELQKLYPQIVQDDKSVVCFLLHCQKFIELVRVGKLEE).

Belongs to the RANBP9/10 family. In terms of assembly, interacts with WDR36, WDS, GID8, MAEA and RMD5.

It localises to the cytoplasm. Its subcellular location is the nucleus. It is found in the perinuclear region. This is Ran-binding protein M homolog from Arabidopsis thaliana (Mouse-ear cress).